The following is a 434-amino-acid chain: E3 ubiquitin-protein transferase MAEA (434 aa).

The segment at 1-124 (MAVQESAAQL…AAASVWKRKR (124 aa)) is extracellular and involved in cell to cell contact. Thr28 carries the phosphothreonine modification. The LisH domain occupies 121–153 (KRKRMDRMMVEHLLRCGYYNTAVKLARQSGIED). A CTLH domain is found at 159-254 (MFLTAKEVEE…ELIRQNKRLD (96 aa)). The disordered stretch occupies residues 190 to 222 (RKMKGRQSEHDAKTGRKSRVASGSPKESEDLGM). The segment at 352–419 (CPVCSRSLNK…QDDKVVCPRT (68 aa)) adopts an RING-Gid-type zinc-finger fold.

In terms of assembly, identified in the CTLH complex that contains GID4, RANBP9 and/or RANBP10, MKLN1, MAEA, RMND5A (or alternatively its paralog RMND5B), GID8, ARMC8, WDR26 and YPEL5. Within this complex, MAEA, RMND5A (or alternatively its paralog RMND5B), GID8, WDR26, and RANBP9 and/or RANBP10 form the catalytic core, while GID4, MKLN1, ARMC8 and YPEL5 have ancillary roles. Interacts with F-actin. Autoubiquitinated as component of the CTLH E3 ubiquitin-protein ligase complex (in vitro).

Its subcellular location is the cytoplasm. It localises to the nucleus. It is found in the nucleoplasm. The protein localises to the nucleus matrix. The protein resides in the cell membrane. Its subcellular location is the cytoskeleton. It carries out the reaction S-ubiquitinyl-[E2 ubiquitin-conjugating enzyme]-L-cysteine + [acceptor protein]-L-lysine = [E2 ubiquitin-conjugating enzyme]-L-cysteine + N(6)-ubiquitinyl-[acceptor protein]-L-lysine.. Its function is as follows. Core component of the CTLH E3 ubiquitin-protein ligase complex that selectively accepts ubiquitin from UBE2H and mediates ubiquitination and subsequent proteasomal degradation of the transcription factor HBP1. MAEA and RMND5A are both required for catalytic activity of the CTLH E3 ubiquitin-protein ligase complex. MAEA is required for normal cell proliferation. The CTLH E3 ubiquitin-protein ligase complex is not required for the degradation of enzymes involved in gluconeogenesis, such as FBP1. Plays a role in erythroblast enucleation during erythrocyte maturation and in the development of mature macrophages. Mediates the attachment of erythroid cell to mature macrophages; this MAEA-mediated contact inhibits erythroid cell apoptosis. Participates in erythroblastic island formation, which is the functional unit of definitive erythropoiesis. Associates with F-actin to regulate actin distribution in erythroblasts and macrophages. May contribute to nuclear architecture and cells division events. The polypeptide is E3 ubiquitin-protein transferase MAEA (MAEA) (Bos taurus (Bovine)).